A 311-amino-acid polypeptide reads, in one-letter code: MANPLYQKHIISINDLSREDLELVLATAAKLKANPQPELLKHKVIASCFFEASTRTRLSFETSMHRLGASVVGFSDSANTSLGKKGETLADTISVISTYVDAIVMRHPQEGAARLATEFSGGVPVLNAGDGANQHPTQTLLDLFTIQETQGRLENLNVAMVGDLKYGRTVHSLTQALAKFNGNRFYFIAPDALAMPQYILDMLDEKGIAWSLHSAIDDVMAEVDILYMTRVQKERLDPSEYANVKAQFVLRAADLEGARANMKVLHPLPRIDEITTDVDKTPHAWYFQQAGNGIFARQALLALVLNSELAL.

Residues R55 and T56 each coordinate carbamoyl phosphate. Position 85 (K85) interacts with L-aspartate. Carbamoyl phosphate is bound by residues R106, H135, and Q138. L-aspartate-binding residues include R168 and R230. Carbamoyl phosphate contacts are provided by L268 and P269.

The protein belongs to the aspartate/ornithine carbamoyltransferase superfamily. ATCase family. Heterododecamer (2C3:3R2) of six catalytic PyrB chains organized as two trimers (C3), and six regulatory PyrI chains organized as three dimers (R2).

The enzyme catalyses carbamoyl phosphate + L-aspartate = N-carbamoyl-L-aspartate + phosphate + H(+). The protein operates within pyrimidine metabolism; UMP biosynthesis via de novo pathway; (S)-dihydroorotate from bicarbonate: step 2/3. Its function is as follows. Catalyzes the condensation of carbamoyl phosphate and aspartate to form carbamoyl aspartate and inorganic phosphate, the committed step in the de novo pyrimidine nucleotide biosynthesis pathway. The sequence is that of Aspartate carbamoyltransferase catalytic subunit from Klebsiella pneumoniae subsp. pneumoniae (strain ATCC 700721 / MGH 78578).